The primary structure comprises 831 residues: Protein translocase subunit SecA (831 aa).

ATP is bound by residues Gln88, 106–110, and Asp495; that span reads GEGKT. Positions 816, 818, 827, and 828 each coordinate Zn(2+).

It belongs to the SecA family. Monomer and homodimer. Part of the essential Sec protein translocation apparatus which comprises SecA, SecYEG and auxiliary proteins SecDF-YajC and YidC. The cofactor is Zn(2+).

Its subcellular location is the cell membrane. It is found in the cytoplasm. The catalysed reaction is ATP + H2O + cellular proteinSide 1 = ADP + phosphate + cellular proteinSide 2.. Its function is as follows. Part of the Sec protein translocase complex. Interacts with the SecYEG preprotein conducting channel. Has a central role in coupling the hydrolysis of ATP to the transfer of proteins into and across the cell membrane, serving as an ATP-driven molecular motor driving the stepwise translocation of polypeptide chains across the membrane. The protein is Protein translocase subunit SecA of Lawsonia intracellularis (strain PHE/MN1-00).